A 744-amino-acid polypeptide reads, in one-letter code: Prestin (744 aa).

Over 1–75 (MDHAEENEIP…PITKWLPAYK (75 aa)) the chain is Cytoplasmic. The helical transmembrane segment at 76 to 105 (FKEYVLGDLVSGISTGVLQLPQGLAFAMLA) threads the bilayer. Residues 106–108 (AVP) lie on the Extracellular side of the membrane. Residues 109 to 126 (PVFGLYSSFYPVIMYCFF) form a helical membrane-spanning segment. The Cytoplasmic segment spans residues 127-137 (GTSRHISIGPF). Residues 138-151 (AVISLMIGGVAVRL) traverse the membrane as a helical segment. Over 152 to 168 (VPDDIVIPGGVNATNGT) the chain is Extracellular. Residues 158-168 (IPGGVNATNGT) carry the Involved in motor function motif. N-linked (GlcNAc...) asparagine glycans are attached at residues asparagine 163 and asparagine 166. The helical transmembrane segment at 169 to 196 (EARDALRVKVAMSVTLLSGIIQFCLGVC) threads the bilayer. The Cytoplasmic segment spans residues 197 to 206 (RFGFVAIYLT). A helical membrane pass occupies residues 207–230 (EPLVRGFTTAAAVHVFTSMLKYLF). Residues 231–241 (GVKTKRYSGIF) are Extracellular-facing. Positions 242–253 (SVVYSTVAVLQN) form an intramembrane region, helical. At 254-258 (VKNLN) the chain is on the extracellular side. Residues 259 to 282 (VCSLGVGLMVFGLLLGGKEFNERF) form a helical membrane-spanning segment. The Cytoplasmic portion of the chain corresponds to 283–291 (KEKLPAPIP). Residues 292–307 (LEFFAVVMGTGISAGF) traverse the membrane as a helical segment. At 308–332 (NLHESYSVDVVGTLPLGLLPPANPD) the chain is on the extracellular side. The helical transmembrane segment at 333-367 (TSLFHLVYVDAIAIAIVGFSVTISMAKTLANKHGY) threads the bilayer. Over 368–370 (QVD) the chain is Cytoplasmic. A helical membrane pass occupies residues 371–388 (GNQELIALGICNSIGSLF). Over 389 to 396 (QTFSISCS) the chain is Extracellular. A helical membrane pass occupies residues 397–406 (LSRSLVQEGT). Serine 398 contributes to the salicylate binding site. The Cytoplasmic portion of the chain corresponds to 407–410 (GGKT). A helical membrane pass occupies residues 411–432 (QLAGCLASLMILLVILATGFLF). The Extracellular portion of the chain corresponds to 433–436 (ESLP). The helical transmembrane segment at 437 to 464 (QAVLSAIVIVNLKGMFMQFSDLPFFWRT) threads the bilayer. Residue serine 465 is a topological domain, cytoplasmic. Residues 466–481 (KIELTIWLTTFVSSLF) form a helical membrane-spanning segment. Over 482–483 (LG) the chain is Extracellular. The chain crosses the membrane as a helical span at residues 484-504 (LDYGLITAVIIALLTVIYRTQ). The segment at 505–718 (SPSYKVLGQL…AVLGSQVREA (214 aa)) is extended region for STAS domain. At 505–744 (SPSYKVLGQL…PNATPTTPEA (240 aa)) the chain is on the cytoplasmic side. Positions 525–713 (AYEEVKEIPG…HSIHDAVLGS (189 aa)) constitute an STAS domain. Residues 720–744 (AEQEATASLPQEDMEPNATPTTPEA) are disordered.

Belongs to the SLC26A/SulP transporter (TC 2.A.53) family. In terms of assembly, homodimer. Interacts (via STAS domain) with CALM; this interaction is calcium-dependent and the STAS domain interacts with only one lobe of CALM which is an elongated conformation. Interacts with MYH1. Expressed in the outer hair cells (OHC) of the organ of Corti of the inner ear. Also weak expression in brain and testis. Very weakly expressed in heart, spleen, muscle and lactating mammary glands. Expressed in cardiac myocytes (at protein level), both in the surface sarcolemma and along the t-tubule. Weakly expressed in skeletal muscle cells (at protein level).

It is found in the lateral cell membrane. It catalyses the reaction 2 hydrogencarbonate(in) + chloride(out) = 2 hydrogencarbonate(out) + chloride(in). In terms of biological role, voltage-sensitive motor protein that drives outer hair cell (OHC) electromotility (eM) and participates in sound amplification in the hearing organ. Converts changes in the transmembrane electric potential into mechanical displacements resulting in the coupling of its expansion to movement of a charged voltage sensor across the lipid membrane. The nature of the voltage sensor is not completely clear, and two models compete. In the first model, acts as an incomplete transporter where intracellular chloride anion acts as extrinsic voltage sensor that drives conformational change in the protein which is sufficient to produce a length change in the plane of the membrane and hence in the length of the OHC. The second model in which multiple charged amino acid residues are distributed at the intracellular and extracellular membrane interfaces that form an intrinsic voltage sensor, whose movement produces the non-linear capacitance (NLC). However, the effective voltage sensor may be the result of a hybrid voltage sensor, assembled from intrinsic charge (charged residues) and extrinsic charge (bound anion). Notably, binding of anions to the anion-binding pocket partially neutralizes the intrinsic positive charge rather than to form an electrically negative sensor, therefore remaining charge may serve as voltage sensor that, after depolarization, moves from down (expanded state) to up (contracted) conformation, which is accompanied by an eccentric contraction of the intermembrane cross-sectional area of the protein as well as a major increase in the hydrophobic thickness of the protein having as consequences the plasma membrane thickening and the cell contraction after membrane depolarization. The anion-binding pocket transits from the inward-open (Down) state, where it is exposed toward the intracellular solvent in the absence of anion, to the occluded (Up) state upon anion binding. Salicylate competes for the anion-binding site and inhibits the voltage-sensor movement, and therefore inhibits the charge transfer and electromotility by displacing Cl(-) from the anion-binding site and by preventing the structural transitions to the contracted state. In addition, can act as a weak Cl(-)/HCO3(-) antiporter across the cell membrane and so regulate the intracellular pH of the outer hair cells (OHCs), while firstly found as being unable to mediate electrogenic anion transport. Moreover, supports a role in cardiac mechanical amplification serving as an elastic element to enhance the actomyosin- based sarcomere contraction system. The sequence is that of Prestin from Mus musculus (Mouse).